The chain runs to 349 residues: NADH-quinone oxidoreductase subunit H (349 aa).

A run of 8 helical transmembrane segments spans residues Trp16 to Val36, Gly88 to Val108, Leu123 to Ala143, Ala157 to Ile177, Phe202 to Ile222, Ile264 to Phe284, Leu285 to Trp305, and Val325 to Leu345.

Belongs to the complex I subunit 1 family. In terms of assembly, NDH-1 is composed of 14 different subunits. Subunits NuoA, H, J, K, L, M, N constitute the membrane sector of the complex.

It is found in the cell inner membrane. The catalysed reaction is a quinone + NADH + 5 H(+)(in) = a quinol + NAD(+) + 4 H(+)(out). Functionally, NDH-1 shuttles electrons from NADH, via FMN and iron-sulfur (Fe-S) centers, to quinones in the respiratory chain. The immediate electron acceptor for the enzyme in this species is believed to be ubiquinone. Couples the redox reaction to proton translocation (for every two electrons transferred, four hydrogen ions are translocated across the cytoplasmic membrane), and thus conserves the redox energy in a proton gradient. This subunit may bind ubiquinone. The protein is NADH-quinone oxidoreductase subunit H of Azoarcus sp. (strain BH72).